Reading from the N-terminus, the 380-residue chain is Cytochrome b (380 aa).

The next 4 helical transmembrane spans lie at 34 to 54, 78 to 99, 114 to 134, and 179 to 199; these read FGSL…LLAM, WLIR…YLHI, WNTG…GYVL, and FFAL…IHLT. Residues His84 and His98 each contribute to the heme b site. Residues His183 and His197 each contribute to the heme b site. His202 serves as a coordination point for a ubiquinone. 4 consecutive transmembrane segments (helical) span residues 227 to 247, 289 to 309, 321 to 341, and 348 to 368; these read LKDI…ALFS, LGGV…PLLH, LSQL…WIGS, and FIII…ILFP.

The protein belongs to the cytochrome b family. As to quaternary structure, the cytochrome bc1 complex contains 11 subunits: 3 respiratory subunits (MT-CYB, CYC1 and UQCRFS1), 2 core proteins (UQCRC1 and UQCRC2) and 6 low-molecular weight proteins (UQCRH/QCR6, UQCRB/QCR7, UQCRQ/QCR8, UQCR10/QCR9, UQCR11/QCR10 and a cleavage product of UQCRFS1). This cytochrome bc1 complex then forms a dimer. Requires heme b as cofactor.

The protein resides in the mitochondrion inner membrane. In terms of biological role, component of the ubiquinol-cytochrome c reductase complex (complex III or cytochrome b-c1 complex) that is part of the mitochondrial respiratory chain. The b-c1 complex mediates electron transfer from ubiquinol to cytochrome c. Contributes to the generation of a proton gradient across the mitochondrial membrane that is then used for ATP synthesis. This chain is Cytochrome b (MT-CYB), found in Oceanodroma microsoma (Least storm petrel).